Reading from the N-terminus, the 101-residue chain is Aspartyl/glutamyl-tRNA(Asn/Gln) amidotransferase subunit C (101 aa).

This sequence belongs to the GatC family. In terms of assembly, heterotrimer of A, B and C subunits.

It carries out the reaction L-glutamyl-tRNA(Gln) + L-glutamine + ATP + H2O = L-glutaminyl-tRNA(Gln) + L-glutamate + ADP + phosphate + H(+). The catalysed reaction is L-aspartyl-tRNA(Asn) + L-glutamine + ATP + H2O = L-asparaginyl-tRNA(Asn) + L-glutamate + ADP + phosphate + 2 H(+). Functionally, allows the formation of correctly charged Asn-tRNA(Asn) or Gln-tRNA(Gln) through the transamidation of misacylated Asp-tRNA(Asn) or Glu-tRNA(Gln) in organisms which lack either or both of asparaginyl-tRNA or glutaminyl-tRNA synthetases. The reaction takes place in the presence of glutamine and ATP through an activated phospho-Asp-tRNA(Asn) or phospho-Glu-tRNA(Gln). In Lactococcus lactis subsp. cremoris (strain SK11), this protein is Aspartyl/glutamyl-tRNA(Asn/Gln) amidotransferase subunit C.